Here is a 409-residue protein sequence, read N- to C-terminus: Peptidase T (409 aa).

His-78 provides a ligand contact to Zn(2+). Asp-80 is a catalytic residue. Residue Asp-140 coordinates Zn(2+). The Proton acceptor role is filled by Glu-173. 3 residues coordinate Zn(2+): Glu-174, Asp-196, and His-379.

The protein belongs to the peptidase M20B family. Zn(2+) serves as cofactor.

Its subcellular location is the cytoplasm. The catalysed reaction is Release of the N-terminal residue from a tripeptide.. Functionally, cleaves the N-terminal amino acid of tripeptides. The polypeptide is Peptidase T (Salmonella paratyphi C (strain RKS4594)).